We begin with the raw amino-acid sequence, 396 residues long: NADH-quinone oxidoreductase subunit D (396 aa).

The protein belongs to the complex I 49 kDa subunit family. As to quaternary structure, NDH-1 is composed of 14 different subunits. Subunits NuoB, C, D, E, F, and G constitute the peripheral sector of the complex.

The protein localises to the cell inner membrane. The catalysed reaction is a quinone + NADH + 5 H(+)(in) = a quinol + NAD(+) + 4 H(+)(out). Functionally, NDH-1 shuttles electrons from NADH, via FMN and iron-sulfur (Fe-S) centers, to quinones in the respiratory chain. The immediate electron acceptor for the enzyme in this species is believed to be ubiquinone. Couples the redox reaction to proton translocation (for every two electrons transferred, four hydrogen ions are translocated across the cytoplasmic membrane), and thus conserves the redox energy in a proton gradient. This Chelativorans sp. (strain BNC1) protein is NADH-quinone oxidoreductase subunit D.